Consider the following 49-residue polypeptide: Zinc-containing ferredoxin (49 aa).

Positions 1-36 (GIDPNYRTSRQVVGEHQGHKVYGPVDPPKVLGIHGT) are N-terminal extension. Zn(2+)-binding residues include His16 and His19. Lys29 is modified (N6-methyllysine). His34 contributes to the Zn(2+) binding site. Residues 37-49 (IVXVDFDLCIADG) are ferredoxin. Cys45 is a [3Fe-4S] cluster binding site.

Requires [3Fe-4S] cluster as cofactor. [4Fe-4S] cluster serves as cofactor. It depends on Zn(2+) as a cofactor.

Its function is as follows. Ferredoxins are iron-sulfur proteins that transfer electrons in a wide variety of metabolic reactions. This is Zinc-containing ferredoxin (zfx) from Acidianus infernus.